Reading from the N-terminus, the 800-residue chain is Endonuclease MutS2 (800 aa).

336–343 (GPNTGGKT) contributes to the ATP binding site. Positions 725 to 800 (LDLRGVRYEA…GDGATIVELK (76 aa)) constitute a Smr domain.

Belongs to the DNA mismatch repair MutS family. MutS2 subfamily. In terms of assembly, homodimer. Binds to stalled ribosomes, contacting rRNA.

In terms of biological role, endonuclease that is involved in the suppression of homologous recombination and thus may have a key role in the control of bacterial genetic diversity. Its function is as follows. Acts as a ribosome collision sensor, splitting the ribosome into its 2 subunits. Detects stalled/collided 70S ribosomes which it binds and splits by an ATP-hydrolysis driven conformational change. Acts upstream of the ribosome quality control system (RQC), a ribosome-associated complex that mediates the extraction of incompletely synthesized nascent chains from stalled ribosomes and their subsequent degradation. Probably generates substrates for RQC. The protein is Endonuclease MutS2 of Leuconostoc mesenteroides subsp. mesenteroides (strain ATCC 8293 / DSM 20343 / BCRC 11652 / CCM 1803 / JCM 6124 / NCDO 523 / NBRC 100496 / NCIMB 8023 / NCTC 12954 / NRRL B-1118 / 37Y).